The chain runs to 336 residues: Biotin synthase (336 aa).

A Radical SAM core domain is found at 51–270 (NQVQCNQLLN…IALARIMMPK (220 aa)). [4Fe-4S] cluster-binding residues include Cys66, Cys70, and Cys73. [2Fe-2S] cluster-binding residues include Cys110, Cys141, Cys201, and Arg274.

This sequence belongs to the radical SAM superfamily. Biotin synthase family. In terms of assembly, homodimer. [4Fe-4S] cluster serves as cofactor. The cofactor is [2Fe-2S] cluster.

It carries out the reaction (4R,5S)-dethiobiotin + (sulfur carrier)-SH + 2 reduced [2Fe-2S]-[ferredoxin] + 2 S-adenosyl-L-methionine = (sulfur carrier)-H + biotin + 2 5'-deoxyadenosine + 2 L-methionine + 2 oxidized [2Fe-2S]-[ferredoxin]. It participates in cofactor biosynthesis; biotin biosynthesis; biotin from 7,8-diaminononanoate: step 2/2. Its function is as follows. Catalyzes the conversion of dethiobiotin (DTB) to biotin by the insertion of a sulfur atom into dethiobiotin via a radical-based mechanism. This chain is Biotin synthase, found in Rhodopseudomonas palustris (strain ATCC BAA-98 / CGA009).